The following is a 438-amino-acid chain: Xylose isomerase (438 aa).

Residues His100 and Asp103 contribute to the active site. The Mg(2+) site is built by Glu231, Glu267, His270, Asp295, Asp306, Asp308, and Asp338.

This sequence belongs to the xylose isomerase family. In terms of assembly, homotetramer. Requires Mg(2+) as cofactor.

The protein localises to the cytoplasm. The catalysed reaction is alpha-D-xylose = alpha-D-xylulofuranose. This chain is Xylose isomerase, found in Pseudomonas syringae pv. tomato (strain ATCC BAA-871 / DC3000).